A 487-amino-acid polypeptide reads, in one-letter code: Protein SMG9 (487 aa).

2 disordered regions span residues 30 to 83 (EDAA…PPAL) and 136 to 164 (RDKG…LQPP). A compositionally biased stretch (basic and acidic residues) spans 42–70 (LKKDRDREQETWDRERDKDRKLERDREAE).

Belongs to the SMG9 family.

Functionally, involved in nonsense-mediated decay (NMD) of mRNAs containing premature stop codons. Probable component of kinase complex containing nonC and recruited to stalled ribosomes. The sequence is that of Protein SMG9 from Drosophila melanogaster (Fruit fly).